Here is a 298-residue protein sequence, read N- to C-terminus: Aspartate carbamoyltransferase catalytic subunit (298 aa).

2 residues coordinate carbamoyl phosphate: R50 and T51. K79 contributes to the L-aspartate binding site. Residues R100, H128, and Q131 each coordinate carbamoyl phosphate. Positions 160 and 221 each coordinate L-aspartate. Carbamoyl phosphate is bound by residues L260 and P261.

Belongs to the aspartate/ornithine carbamoyltransferase superfamily. ATCase family. As to quaternary structure, heterooligomer of catalytic and regulatory chains.

The enzyme catalyses carbamoyl phosphate + L-aspartate = N-carbamoyl-L-aspartate + phosphate + H(+). It functions in the pathway pyrimidine metabolism; UMP biosynthesis via de novo pathway; (S)-dihydroorotate from bicarbonate: step 2/3. In terms of biological role, catalyzes the condensation of carbamoyl phosphate and aspartate to form carbamoyl aspartate and inorganic phosphate, the committed step in the de novo pyrimidine nucleotide biosynthesis pathway. The polypeptide is Aspartate carbamoyltransferase catalytic subunit (Methanospirillum hungatei JF-1 (strain ATCC 27890 / DSM 864 / NBRC 100397 / JF-1)).